The primary structure comprises 359 residues: DNA-directed RNA polymerase subunit alpha (359 aa).

An alpha N-terminal domain (alpha-NTD) region spans residues 1 to 226 (MLISQRPSLA…ELFGLARELN (226 aa)). Positions 241-359 (ADTIAAYAMP…GQDYAETEQL (119 aa)) are alpha C-terminal domain (alpha-CTD). The tract at residues 315–359 (FDPSAAAAEYPSEGWASETETVGGLGRVEDNGYDDGQDYAETEQL) is disordered. Acidic residues predominate over residues 345-359 (NGYDDGQDYAETEQL).

Belongs to the RNA polymerase alpha chain family. In terms of assembly, homodimer. The RNAP catalytic core consists of 2 alpha, 1 beta, 1 beta' and 1 omega subunit. When a sigma factor is associated with the core the holoenzyme is formed, which can initiate transcription.

It catalyses the reaction RNA(n) + a ribonucleoside 5'-triphosphate = RNA(n+1) + diphosphate. DNA-dependent RNA polymerase catalyzes the transcription of DNA into RNA using the four ribonucleoside triphosphates as substrates. The protein is DNA-directed RNA polymerase subunit alpha of Saccharopolyspora erythraea (strain ATCC 11635 / DSM 40517 / JCM 4748 / NBRC 13426 / NCIMB 8594 / NRRL 2338).